Reading from the N-terminus, the 266-residue chain is Proteasome subunit beta type-7 (266 aa).

Positions 1-33 (MNHDPFSWGRPADSTYGAYNTQIANAGASPMVN) are excised as a propeptide.

Belongs to the peptidase T1B family. As to quaternary structure, the 26S proteasome consists of a 20S proteasome core and two 19S regulatory subunits. The 20S proteasome core is composed of 28 subunits that are arranged in four stacked rings, resulting in a barrel-shaped structure. The two end rings are each formed by seven alpha subunits, and the two central rings are each formed by seven beta subunits. The catalytic chamber with the active sites is on the inside of the barrel. Interacts with CIC1.

The protein localises to the cytoplasm. Its subcellular location is the nucleus. Non-catalytic component of the proteasome which degrades poly-ubiquitinated proteins in the cytoplasm and in the nucleus. It is essential for the regulated turnover of proteins and for the removal of misfolded proteins. The proteasome is a multicatalytic proteinase complex that is characterized by its ability to cleave peptides with Arg, Phe, Tyr, Leu, and Glu adjacent to the leaving group at neutral or slightly basic pH. It has an ATP-dependent proteolytic activity. PRE3 and PRE4 are necessary for the peptidyl-glutamyl-peptide-hydrolyzing activity. This Saccharomyces cerevisiae (strain ATCC 204508 / S288c) (Baker's yeast) protein is Proteasome subunit beta type-7 (PRE4).